The sequence spans 1036 residues: Ubiquitin carboxyl-terminal hydrolase 48 (1036 aa).

In terms of domain architecture, USP spans 89 to 421 (VGLTNLGASC…NAYMLVYRLQ (333 aa)). The active-site Nucleophile is Cys98. His353 (proton acceptor) is an active-site residue. 3 DUSP domains span residues 460 to 554 (QSVD…KALC), 569 to 692 (NQLN…YKEC), and 712 to 825 (MIAK…RIEV). Positions 611–644 (DEQDGEAEQSNGKINGSPFSKDESKEEKKEEEEE) are disordered. Polar residues predominate over residues 618–628 (EQSNGKINGSP). The disordered stretch occupies residues 881–924 (APELNVSSSETEEDKEEAKPDGEKDPDFNQSNGGTKRQKTSQQG). Ser887, Ser888, and Ser889 each carry phosphoserine. The segment covering 896 to 907 (EEAKPDGEKDPD) has biased composition (basic and acidic residues). Residues 908–924 (FNQSNGGTKRQKTSQQG) show a composition bias toward polar residues. Residues 930–1010 (KQVIRRSTRH…ILLKADEPIA (81 aa)) enclose the Ubiquitin-like domain. Lys957 carries the post-translational modification N6-acetyllysine.

The protein belongs to the peptidase C19 family. Interacts with TRAF2 and RELA. Interacts with GPS1. As to expression, present in the brain, in particular in the postsynaptic density and the dendritic lipid raft fractions (at protein level).

The protein localises to the cytoplasm. It is found in the nucleus. It localises to the cell projection. The protein resides in the cilium. The enzyme catalyses Thiol-dependent hydrolysis of ester, thioester, amide, peptide and isopeptide bonds formed by the C-terminal Gly of ubiquitin (a 76-residue protein attached to proteins as an intracellular targeting signal).. Deubiquitinase that recognizes and hydrolyzes the peptide bond at the C-terminal Gly of ubiquitin. Involved in the processing of polyubiquitin precursors as well as that of ubiquitinated proteins. Plays a role in the regulation of NF-kappa-B activation by TNF receptor superfamily via its interactions with RELA and TRAF2. May also play a regulatory role at postsynaptic sites. Plays an important role in cell cycle progression by deubiquitinating Aurora B/AURKB and thereby extending its stability. In the context of H. pylori infection, stabilizes nuclear RELA through deubiquitination, thereby promoting the transcriptional activity of RELA to prolong TNFAIP3 de novo synthesis. Consequently, TNFAIP3 suppresses caspase activity and apoptotic cell death. Also functions in the modulation of the ciliary and synaptic transport as well as cytoskeleton organization, which are key for photoreceptor function and homeostasis. To achieve this, stabilizes the levels of the retinal degeneration-associated proteins ARL3 and UNC119 using distinct mechanisms. Plays a positive role in pyroptosis by stabilizing gasdermin E/GSDME through removal of its 'Lys-48'-linked ubiquitination. This Rattus norvegicus (Rat) protein is Ubiquitin carboxyl-terminal hydrolase 48 (Usp48).